Here is a 141-residue protein sequence, read N- to C-terminus: Hemoglobin subunit alpha (141 aa).

Residues 1–141 (VLSPADKTNV…VSTVLTSKYR (141 aa)) enclose the Globin domain. At serine 3 the chain carries Phosphoserine. Lysine 7 carries the N6-succinyllysine modification. A Phosphothreonine modification is found at threonine 8. At lysine 11 the chain carries N6-succinyllysine. Position 16 is an N6-acetyllysine; alternate (lysine 16). An N6-succinyllysine; alternate modification is found at lysine 16. Tyrosine 24 carries the phosphotyrosine modification. Phosphoserine is present on serine 35. An N6-succinyllysine modification is found at lysine 40. Residue serine 49 is modified to Phosphoserine. O2 is bound at residue histidine 58. Position 87 (histidine 87) interacts with heme b. Serine 102 carries the post-translational modification Phosphoserine. Threonine 108 is modified (phosphothreonine). Position 124 is a phosphoserine (serine 124). A phosphothreonine mark is found at threonine 134 and threonine 137. Serine 138 carries the post-translational modification Phosphoserine.

This sequence belongs to the globin family. Heterotetramer of two alpha chains and two beta chains. Red blood cells.

In terms of biological role, involved in oxygen transport from the lung to the various peripheral tissues. Its function is as follows. Hemopressin acts as an antagonist peptide of the cannabinoid receptor CNR1. Hemopressin-binding efficiently blocks cannabinoid receptor CNR1 and subsequent signaling. In Lutra lutra (European river otter), this protein is Hemoglobin subunit alpha (HBA).